The following is a 511-amino-acid chain: Probable cytochrome P450 4d21 (511 aa).

Heme is bound at residue Cys456.

It belongs to the cytochrome P450 family. It depends on heme as a cofactor.

The protein resides in the endoplasmic reticulum membrane. Its subcellular location is the microsome membrane. May be involved in the metabolism of insect hormones and in the breakdown of synthetic insecticides. The polypeptide is Probable cytochrome P450 4d21 (Cyp4d21) (Drosophila melanogaster (Fruit fly)).